A 133-amino-acid chain; its full sequence is Large ribosomal subunit protein eL32 (133 aa).

It belongs to the eukaryotic ribosomal protein eL32 family.

The protein is Large ribosomal subunit protein eL32 (rpl32) of Dictyostelium discoideum (Social amoeba).